The following is a 411-amino-acid chain: Diels-Alderase ffsF (411 aa).

The N-terminal stretch at 1-17 is a signal peptide; the sequence is MTQIKLLLLSLAITAQS.

It belongs to the Diels-Alderase family.

Its pathway is mycotoxin biosynthesis. In terms of biological role, diels-Alderase; part of the gene cluster that mediates the biosynthesis of the cytotoxic leucine-containing cytochalasans, including aspochalasin C, aspochalasin E, TMC-169, flavichalasine F, aspergillin PZ, aspochalasin M and flavichalasine G. The first step in the pathway is catalyzed by the hybrid PKS-NRPS ffsA that utilizes 8 units of malonyl-CoA to iteratively assemble the octaketide chain before addition of L-leucine by the C-terminal NRPS modules. Because ffsA lacks a designated enoylreductase (ER) domain, the required activity is provided the enoyl reductase fssC. The methyltransferase (MT) domain of ffsA catalyzes the alpha-methylation at C10 and C14 using S-adenosyl-L-methionine as the methyl-donating cosubstrate. Reduction by the hydrolyase ffsE, followed by dehydration and intra-molecular Diels-Alder cyclization by the Diels-Alderase ffsF then yield the required isoindolone-fused macrocycle. A number of oxidative steps catalyzed by the tailoring cytochrome P450 monooxygenase ffsD, the FAD-linked oxidoreductase ffsJ and the short-chain dehydrogenase/reductase ffsI, are further required to afford the final products. This Aspergillus flavipes protein is Diels-Alderase ffsF.